A 155-amino-acid polypeptide reads, in one-letter code: Aspartate carbamoyltransferase regulatory chain (155 aa).

The Zn(2+) site is built by Cys-113, Cys-118, Cys-139, and Cys-142.

The protein belongs to the PyrI family. In terms of assembly, contains catalytic and regulatory chains. The cofactor is Zn(2+).

Involved in allosteric regulation of aspartate carbamoyltransferase. This chain is Aspartate carbamoyltransferase regulatory chain, found in Methanoculleus marisnigri (strain ATCC 35101 / DSM 1498 / JR1).